Reading from the N-terminus, the 384-residue chain is Endoglucanase (384 aa).

An N-terminal signal peptide occupies residues methionine 1–alanine 25. Glutamate 63 acts as the Proton donor in catalysis. Aspartate 124 serves as the catalytic Nucleophile.

Belongs to the glycosyl hydrolase 8 (cellulase D) family.

The protein localises to the secreted. The enzyme catalyses Endohydrolysis of (1-&gt;4)-beta-D-glucosidic linkages in cellulose, lichenin and cereal beta-D-glucans.. It functions in the pathway glycan metabolism; bacterial cellulose biosynthesis. In terms of biological role, hydrolyzes carboxymethylcellulose. This is Endoglucanase (bcsZ) from Xanthomonas axonopodis pv. citri (strain 306).